The following is a 620-amino-acid chain: Chaperone protein DnaK (620 aa).

Thr197 is subject to Phosphothreonine; by autocatalysis. Residues 597-620 form a disordered region; sequence AMANKNNAEQPKKKDDDVIDAEVE.

Belongs to the heat shock protein 70 family.

Functionally, acts as a chaperone. This Helicobacter acinonychis (strain Sheeba) protein is Chaperone protein DnaK.